A 125-amino-acid chain; its full sequence is Ribonuclease P protein component (125 aa).

This sequence belongs to the RnpA family. In terms of assembly, consists of a catalytic RNA component (M1 or rnpB) and a protein subunit.

It catalyses the reaction Endonucleolytic cleavage of RNA, removing 5'-extranucleotides from tRNA precursor.. Functionally, RNaseP catalyzes the removal of the 5'-leader sequence from pre-tRNA to produce the mature 5'-terminus. It can also cleave other RNA substrates such as 4.5S RNA. The protein component plays an auxiliary but essential role in vivo by binding to the 5'-leader sequence and broadening the substrate specificity of the ribozyme. The sequence is that of Ribonuclease P protein component from Clostridium botulinum (strain Alaska E43 / Type E3).